A 242-amino-acid chain; its full sequence is NAD-dependent protein deacetylase (242 aa).

The Deacetylase sirtuin-type domain maps to 1 to 242 (MQQFEEVRTI…EFVEGLSSIK (242 aa)). 8 residues coordinate NAD(+): Ala23, Thr27, Phe34, Arg35, Gln102, Ile104, Asp105, and His120. Residue Phe34 participates in nicotinamide binding. The nicotinamide site is built by Ile104 and Asp105. Catalysis depends on His120, which acts as the Proton acceptor. The Zn(2+) site is built by Cys128, Cys131, Cys148, and Cys151. The NAD(+) site is built by Thr187, Ser188, Asn213, and Ile231.

This sequence belongs to the sirtuin family. Class U subfamily. Zn(2+) serves as cofactor.

It is found in the cytoplasm. The enzyme catalyses N(6)-acetyl-L-lysyl-[protein] + NAD(+) + H2O = 2''-O-acetyl-ADP-D-ribose + nicotinamide + L-lysyl-[protein]. Functionally, NAD-dependent protein deacetylase which modulates the activities of several enzymes which are inactive in their acetylated form. The protein is NAD-dependent protein deacetylase of Bacillus anthracis.